The sequence spans 117 residues: Transcription elongation factor SPT4 (117 aa).

An N-acetylalanine modification is found at Ala-2. Residues 2–40 (ALETVPKDLRHLRACLLCSLVKTIDQFEYDGCDNCDAYL) are interaction with SUPT5H. Residues Cys-16, Cys-19, Cys-33, and Cys-36 each contribute to the Zn(2+) site. The C4-type zinc finger occupies 16–36 (CLLCSLVKTIDQFEYDGCDNC).

The protein belongs to the SPT4 family. Interacts with SUPT5H to form DSIF. DSIF interacts with the positive transcription elongation factor b complex (P-TEFb complex), which is composed of CDK9 and cyclin-T (CCNT1 or CCNT2). DSIF interacts with RNA polymerase II, and this interaction is reduced by phosphorylation of the C-terminal domain (CTD) of POLR2A by P-TEFb. DSIF also interacts with the NELF complex, which is composed of NELFA, NELFB, NELFD and NELFE, and this interaction occurs following prior binding of DSIF to RNA polymerase II. DSIF also interacts with PRMT1/HRMT1L2, TATSF1, RNGTT/CAP1A, PRMT5/SKB1, SUPT6H, and can interact with PIN1. In terms of processing, ubiquitinated by UBR5 when not assembled in the DSIF complex, leading to its degradation: UBR5 recognizes and binds a degron that is not accessible when SUPT4H1 is part of the DSIF complex.

The protein localises to the nucleus. In terms of biological role, component of the DRB sensitivity-inducing factor complex (DSIF complex), which regulates mRNA processing and transcription elongation by RNA polymerase II. DSIF positively regulates mRNA capping by stimulating the mRNA guanylyltransferase activity of RNGTT/CAP1A. DSIF also acts cooperatively with the negative elongation factor complex (NELF complex) to enhance transcriptional pausing at sites proximal to the promoter. Transcriptional pausing may facilitate the assembly of an elongation competent RNA polymerase II complex. DSIF and NELF promote pausing by inhibition of the transcription elongation factor TFIIS/S-II. TFIIS/S-II binds to RNA polymerase II at transcription pause sites and stimulates the weak intrinsic nuclease activity of the enzyme. Cleavage of blocked transcripts by RNA polymerase II promotes the resumption of transcription from the new 3' terminus and may allow repeated attempts at transcription through natural pause sites. This chain is Transcription elongation factor SPT4 (SUPT4H1), found in Pongo abelii (Sumatran orangutan).